Reading from the N-terminus, the 278-residue chain is Orotidine 5'-phosphate decarboxylase (278 aa).

Residues aspartate 40, lysine 62–histidine 64, aspartate 93–threonine 102, tyrosine 229, and arginine 247 contribute to the substrate site. Lysine 95 acts as the Proton donor in catalysis.

It belongs to the OMP decarboxylase family.

The catalysed reaction is orotidine 5'-phosphate + H(+) = UMP + CO2. The protein operates within pyrimidine metabolism; UMP biosynthesis via de novo pathway; UMP from orotate: step 2/2. The sequence is that of Orotidine 5'-phosphate decarboxylase (pyrG) from Aspergillus fumigatus (strain ATCC MYA-4609 / CBS 101355 / FGSC A1100 / Af293) (Neosartorya fumigata).